The following is a 118-amino-acid chain: Probable dihydroneopterin aldolase (118 aa).

Residues Glu21, Tyr53, and 72–73 (IE) contribute to the substrate site. The active-site Proton donor/acceptor is the Lys98.

The protein belongs to the DHNA family.

It catalyses the reaction 7,8-dihydroneopterin = 6-hydroxymethyl-7,8-dihydropterin + glycolaldehyde. It functions in the pathway cofactor biosynthesis; tetrahydrofolate biosynthesis; 2-amino-4-hydroxy-6-hydroxymethyl-7,8-dihydropteridine diphosphate from 7,8-dihydroneopterin triphosphate: step 3/4. Catalyzes the conversion of 7,8-dihydroneopterin to 6-hydroxymethyl-7,8-dihydropterin. The sequence is that of Probable dihydroneopterin aldolase (folB) from Synechocystis sp. (strain ATCC 27184 / PCC 6803 / Kazusa).